The primary structure comprises 225 residues: uncharacterized protein (225 aa).

Residues 1–19 show a composition bias toward polar residues; that stretch reads MKFNSISPNKQHHTGFTTS. Residues 1-21 are disordered; that stretch reads MKFNSISPNKQHHTGFTTSNN.

This is an uncharacterized protein from Dictyostelium discoideum (Social amoeba).